The primary structure comprises 263 residues: Ribonuclease HII (263 aa).

The region spanning 71-262 is the RNase H type-2 domain; that stretch reads KAIAGIDEVG…VKSMCCDSTN (192 aa). D77, E78, and D172 together coordinate a divalent metal cation.

This sequence belongs to the RNase HII family. Mn(2+) serves as cofactor. Requires Mg(2+) as cofactor.

It localises to the cytoplasm. The catalysed reaction is Endonucleolytic cleavage to 5'-phosphomonoester.. Functionally, endonuclease that specifically degrades the RNA of RNA-DNA hybrids. The sequence is that of Ribonuclease HII from Streptococcus pyogenes serotype M1.